A 309-amino-acid chain; its full sequence is Ras-like protein 1 (309 aa).

Residues 20–25 (GVGKSA), 36–42 (VDEYDPT), 66–67 (AG), 123–126 (NKLD), and 153–155 (SAK) contribute to the GTP site. Residues 39-47 (YDPTIEDSY) carry the Effector region motif. The segment at 177–303 (KYNSMNRQLD…SANARKESSG (127 aa)) is disordered. Composition is skewed to polar residues over residues 179 to 188 (NSMNRQLDNT) and 209 to 235 (NGSY…NHNG). Basic and acidic residues predominate over residues 236–245 (ETTKRTDEKN). Residues 246–256 (YVNQNNNNEGN) show a composition bias toward low complexity. Residues 257–296 (TKYSSNGNGNRSDISRGNQNNALNSRSKQSAEPQKNSSAN) are compositionally biased toward polar residues. The S-palmitoyl cysteine moiety is linked to residue cysteine 305. A Cysteine methyl ester modification is found at cysteine 306. Residue cysteine 306 is the site of S-farnesyl cysteine attachment. Residues 307–309 (IIC) constitute a propeptide, removed in mature form.

It belongs to the small GTPase superfamily. Ras family. Post-translationally, farnesylated by RAM1-RAM2, which is required for targeting RAS1 to the cytoplasmic site of the endoplasmic reticulum, where proteolytic processing of the C-terminus by RCE1 and methylation of the resulting carboxyl group by STE14 occurs. Palmitoylated by the ERF2-SHR5 complex, which is required for proper plasma membrane localization of RAS1.

It localises to the cell membrane. It carries out the reaction GTP + H2O = GDP + phosphate + H(+). With respect to regulation, alternates between an inactive form bound to GDP and an active form bound to GTP. Activated by guanine nucleotide-exchange factor (GEF) CDC25 and inactivated by GTPase-activating proteins (GAPs) IRA1 and IRA2. Functionally, the S.cerevisiae Ras proteins modulate the activity of the adenylate cyclase catalytic subunit and therefore affect the biosynthesis of cyclic-AMP. The sequence is that of Ras-like protein 1 (RAS1) from Saccharomyces cerevisiae (strain ATCC 204508 / S288c) (Baker's yeast).